The chain runs to 143 residues: MISRRKIRELIVQFLYQWEMNKGVGLDNMLLDFWDFSPLDQKDKEAVEQWLKEIAEHKEAIEEKINSYVKNWSLDRLAPVDKCILILGIYEILYRKDIPPAVSINESVEIAKKYSTEESGKFVNGILDSVLKDSGRKAWMSCP.

This sequence belongs to the NusB family.

Involved in transcription antitermination. Required for transcription of ribosomal RNA (rRNA) genes. Binds specifically to the boxA antiterminator sequence of the ribosomal RNA (rrn) operons. This chain is Transcription antitermination protein NusB, found in Methylacidiphilum infernorum (isolate V4) (Methylokorus infernorum (strain V4)).